We begin with the raw amino-acid sequence, 160 residues long: NADH-quinone oxidoreductase subunit I (160 aa).

4Fe-4S ferredoxin-type domains lie at 51-80 (RRYKNGEERCIACKLCEVVCPAQAITIEAA) and 91-120 (TKYDIDMTKCIYCGFCQEACPVDAIVEGPN). Residues Cys-60, Cys-63, Cys-66, Cys-70, Cys-100, Cys-103, Cys-106, and Cys-110 each contribute to the [4Fe-4S] cluster site.

It belongs to the complex I 23 kDa subunit family. In terms of assembly, NDH-1 is composed of 14 different subunits. Subunits NuoA, H, J, K, L, M, N constitute the membrane sector of the complex. Requires [4Fe-4S] cluster as cofactor.

It localises to the cell inner membrane. The catalysed reaction is a quinone + NADH + 5 H(+)(in) = a quinol + NAD(+) + 4 H(+)(out). Functionally, NDH-1 shuttles electrons from NADH, via FMN and iron-sulfur (Fe-S) centers, to quinones in the respiratory chain. The immediate electron acceptor for the enzyme in this species is believed to be ubiquinone. Couples the redox reaction to proton translocation (for every two electrons transferred, four hydrogen ions are translocated across the cytoplasmic membrane), and thus conserves the redox energy in a proton gradient. The chain is NADH-quinone oxidoreductase subunit I from Neorickettsia sennetsu (strain ATCC VR-367 / Miyayama) (Ehrlichia sennetsu).